A 400-amino-acid chain; its full sequence is 3-phenylpropionate/cinnamic acid dioxygenase ferredoxin--NAD(+) reductase component (400 aa).

FAD is bound at residue 5-36 (TIIIVGGGQAAAMAAASLRQQGFTGELHLFSD). Position 146–174 (146–174 (SVVIVGAGTIGLELAASATQRGCKVTVIE)) interacts with NAD(+).

This sequence belongs to the bacterial ring-hydroxylating dioxygenase ferredoxin reductase family. This dioxygenase system consists of four proteins: the two subunits of the hydroxylase component (HcaE and HcaF), a ferredoxin (HcaC) and a ferredoxin reductase (HcaD). It depends on FAD as a cofactor.

It carries out the reaction 2 reduced [2Fe-2S]-[ferredoxin] + NAD(+) + H(+) = 2 oxidized [2Fe-2S]-[ferredoxin] + NADH. Its pathway is aromatic compound metabolism; 3-phenylpropanoate degradation. In terms of biological role, part of the multicomponent 3-phenylpropionate dioxygenase, that converts 3-phenylpropionic acid (PP) and cinnamic acid (CI) into 3-phenylpropionate-dihydrodiol (PP-dihydrodiol) and cinnamic acid-dihydrodiol (CI-dihydrodiol), respectively. The sequence is that of 3-phenylpropionate/cinnamic acid dioxygenase ferredoxin--NAD(+) reductase component from Escherichia coli (strain SMS-3-5 / SECEC).